Here is a 101-residue protein sequence, read N- to C-terminus: Ubiquitin-related modifier 1 (101 aa).

Gly-101 carries the 1-thioglycine modification. Residue Gly-101 forms a Glycyl lysine isopeptide (Gly-Lys) (interchain with K-? in acceptor proteins) linkage.

The protein belongs to the URM1 family. C-terminal thiocarboxylation occurs in 2 steps, it is first acyl-adenylated (-COAMP) via the hesA/moeB/thiF part of the MOCS3 homolog, then thiocarboxylated (-COSH) via the rhodanese domain of the MOCS3 homolog.

It localises to the cytoplasm. It participates in tRNA modification; 5-methoxycarbonylmethyl-2-thiouridine-tRNA biosynthesis. In terms of biological role, acts as a sulfur carrier required for 2-thiolation of mcm(5)S(2)U at tRNA wobble positions of cytosolic tRNA(Lys), tRNA(Glu) and tRNA(Gln). Serves as sulfur donor in tRNA 2-thiolation reaction by being thiocarboxylated (-COSH) at its C-terminus by MOCS3. The sulfur is then transferred to tRNA to form 2-thiolation of mcm(5)S(2)U. Also acts as a ubiquitin-like protein (UBL) that is covalently conjugated via an isopeptide bond to lysine residues of target proteins. The thiocarboxylated form serves as substrate for conjugation and oxidative stress specifically induces the formation of UBL-protein conjugates. This chain is Ubiquitin-related modifier 1, found in Gallus gallus (Chicken).